Consider the following 168-residue polypeptide: Large ribosomal subunit protein uL10 (168 aa).

It belongs to the universal ribosomal protein uL10 family. Part of the ribosomal stalk of the 50S ribosomal subunit. The N-terminus interacts with L11 and the large rRNA to form the base of the stalk. The C-terminus forms an elongated spine to which L12 dimers bind in a sequential fashion forming a multimeric L10(L12)X complex.

In terms of biological role, forms part of the ribosomal stalk, playing a central role in the interaction of the ribosome with GTP-bound translation factors. This is Large ribosomal subunit protein uL10 from Clostridioides difficile (strain 630) (Peptoclostridium difficile).